The primary structure comprises 319 residues: L-tryptophan isonitrile synthase AmbI1 (319 aa).

The protein belongs to the isocyanide synthase family.

It catalyses the reaction D-ribulose 5-phosphate + L-tryptophan = (2S)-3-(1H-indol-3-yl)-2-isocyanopropanoate + hydroxyacetone + formaldehyde + phosphate + H2O + H(+). Involved in the biosynthesis of ambiguines, a family of hapalindole-type alkaloids. Responsible for the synthesis of the isonitrile group on tryptophan using ribulose 5-phosphate as the source of the carbon atom. The protein is L-tryptophan isonitrile synthase AmbI1 of Fischerella ambigua (strain UTEX 1903).